Consider the following 640-residue polypeptide: Threonine--tRNA ligase (640 aa).

The region spanning Met-1–Thr-61 is the TGS domain. The segment at Asp-242–Pro-533 is catalytic. Zn(2+)-binding residues include Cys-333, His-384, and His-510.

This sequence belongs to the class-II aminoacyl-tRNA synthetase family. In terms of assembly, homodimer. The cofactor is Zn(2+).

The protein localises to the cytoplasm. The catalysed reaction is tRNA(Thr) + L-threonine + ATP = L-threonyl-tRNA(Thr) + AMP + diphosphate + H(+). Functionally, catalyzes the attachment of threonine to tRNA(Thr) in a two-step reaction: L-threonine is first activated by ATP to form Thr-AMP and then transferred to the acceptor end of tRNA(Thr). Also edits incorrectly charged L-seryl-tRNA(Thr). This Pseudomonas savastanoi pv. phaseolicola (strain 1448A / Race 6) (Pseudomonas syringae pv. phaseolicola (strain 1448A / Race 6)) protein is Threonine--tRNA ligase.